The following is a 364-amino-acid chain: Heat-inducible transcription repressor HrcA (364 aa).

The protein belongs to the HrcA family.

Negative regulator of class I heat shock genes (grpE-dnaK-dnaJ and groELS operons). Prevents heat-shock induction of these operons. The protein is Heat-inducible transcription repressor HrcA of Cyanothece sp. (strain PCC 7425 / ATCC 29141).